A 433-amino-acid chain; its full sequence is Ligand-dependent corepressor (433 aa).

A disordered region spans residues 1–51 (MQRMIQQFAAEYTSKNSSTQDPSQPNSTKNQSLPKASPVTTSPTAATTQNP). Residues 13–34 (TSKNSSTQDPSQPNSTKNQSLP) are compositionally biased toward polar residues. Positions 36 to 48 (ASPVTTSPTAATT) are enriched in low complexity. At Ser42 the chain carries Phosphoserine. The short motif at 53–57 (LSKLL) is the Interaction with nuclear receptors element. At Ser63 the chain carries Phosphoserine. The segment at 64-147 (PLDLTVRKSQ…GTREGFGHST (84 aa)) is disordered. The segment covering 93–110 (AGSTSLSHSPGCSSTQGN) has biased composition (polar residues). Ser249 carries the post-translational modification Phosphoserine. Residue Lys254 forms a Glycyl lysine isopeptide (Lys-Gly) (interchain with G-Cter in SUMO2) linkage. The segment at 299 to 348 (QSRKSMLDAGPDSWGSDAEQSTSGQPYPTSDQEGDPGSKQPRKKRGRYRQ) is disordered. Residues 316 to 329 (AEQSTSGQPYPTSD) show a composition bias toward polar residues. The short motif at 339–345 (PRKKRGR) is the Nuclear localization signal element. In terms of domain architecture, HTH psq-type spans 340–392 (RKKRGRYRQYNSEILEEAISVVMSGKMSVSKAQSIYGIPHSTLEYKVKERLGT). Arg345 participates in a covalent cross-link: Glycyl lysine isopeptide (Lys-Gly) (interchain with G-Cter in SUMO2). Residues 368 to 388 (VSKAQSIYGIPHSTLEYKVKE) constitute a DNA-binding region (H-T-H motif). Residue Gly391 forms a Glycyl lysine isopeptide (Lys-Gly) (interchain with G-Cter in SUMO2) linkage. Residues 393–412 (LKNPPKKKMKLMRSEGPDVS) form a disordered region. Residue Lys414 forms a Glycyl lysine isopeptide (Lys-Gly) (interchain with G-Cter in SUMO2) linkage.

In terms of assembly, interacts with ESR1 and ESR2 in the presence of estradiol. Interacts with CTBP1, HDAC3 and HDAC6. Component of a large corepressor complex that contains about 20 proteins, including CTBP1, CTBP2, HDAC1 and HDAC2. In terms of tissue distribution, ubiquitous.

It is found in the nucleus. Functionally, may act as transcription activator that binds DNA elements with the sequence 5'-CCCTATCGATCGATCTCTACCT-3'. Repressor of ligand-dependent transcription activation by target nuclear receptors. Repressor of ligand-dependent transcription activation by ESR1, ESR2, NR3C1, PGR, RARA, RARB, RARG, RXRA and VDR. This Homo sapiens (Human) protein is Ligand-dependent corepressor.